A 572-amino-acid chain; its full sequence is Urease subunit alpha (572 aa).

The 437-residue stretch at 136–572 (GGIDTHIHFI…VPLGQRYFLF (437 aa)) folds into the Urease domain. Ni(2+)-binding residues include His-141, His-143, and Lys-224. Lys-224 carries the N6-carboxylysine modification. Residue His-226 participates in substrate binding. Residues His-253 and His-279 each coordinate Ni(2+). His-327 serves as the catalytic Proton donor. Asp-367 is a Ni(2+) binding site.

The protein belongs to the metallo-dependent hydrolases superfamily. Urease alpha subunit family. In terms of assembly, heterotrimer of UreA (gamma), UreB (beta) and UreC (alpha) subunits. Three heterotrimers associate to form the active enzyme. Ni cation is required as a cofactor. Carboxylation allows a single lysine to coordinate two nickel ions.

It localises to the cytoplasm. The enzyme catalyses urea + 2 H2O + H(+) = hydrogencarbonate + 2 NH4(+). It functions in the pathway nitrogen metabolism; urea degradation; CO(2) and NH(3) from urea (urease route): step 1/1. This chain is Urease subunit alpha, found in Haemophilus influenzae (strain ATCC 51907 / DSM 11121 / KW20 / Rd).